We begin with the raw amino-acid sequence, 234 residues long: Putative N-acetylmannosamine-6-phosphate 2-epimerase (234 aa).

This sequence belongs to the NanE family.

It carries out the reaction an N-acyl-D-glucosamine 6-phosphate = an N-acyl-D-mannosamine 6-phosphate. It participates in amino-sugar metabolism; N-acetylneuraminate degradation; D-fructose 6-phosphate from N-acetylneuraminate: step 3/5. In terms of biological role, converts N-acetylmannosamine-6-phosphate (ManNAc-6-P) to N-acetylglucosamine-6-phosphate (GlcNAc-6-P). The chain is Putative N-acetylmannosamine-6-phosphate 2-epimerase from Klebsiella pneumoniae (strain 342).